The primary structure comprises 397 residues: MEAKGENDARAPLLAERRRNSVGSMRGEFVSRLPKKVLDAVDPERPSHVDFSRSKGLREGEKEYYEKQFATLRSFEEVDSIEESNVMSEEDDIAEQKQSEFAMKISNYANMILLALKIYATIKSGSIAIAASTLDSLLDLMAGGILWFTHLSMKSINVYKYPIGKLRVQPVGIIIFAAVMATLGFQVFVQAVEKLIVNETPDKLTPVQLTWLYSIMIFATVVKLALWLYCRTSGNKIVRAYAKDHYFDVVTNVVGLAAAVLGDMFYWWIDPVGAIALAVYTITNWSGTVWENAVSLVGESAPPEMLQKLTYLAIRHHPQIKRVDTVRAYTFGVLYFVEVDIELPEELPLKEAHAIGESLQIKIEELPEVERAFVHLDFECDHKPEHNILSKLPSSQP.

The segment covering 1–19 (MEAKGENDARAPLLAERRR) has biased composition (basic and acidic residues). The disordered stretch occupies residues 1-27 (MEAKGENDARAPLLAERRRNSVGSMRG). At 1–104 (MEAKGENDAR…EQKQSEFAMK (104 aa)) the chain is on the cytoplasmic side. The helical transmembrane segment at 105 to 122 (ISNYANMILLALKIYATI) threads the bilayer. Residues 123–126 (KSGS) lie on the Vacuolar side of the membrane. Residues 127–147 (IAIAASTLDSLLDLMAGGILW) traverse the membrane as a helical segment. Topologically, residues 148–170 (FTHLSMKSINVYKYPIGKLRVQP) are cytoplasmic. The chain crosses the membrane as a helical span at residues 171–191 (VGIIIFAAVMATLGFQVFVQA). Residues 192 to 208 (VEKLIVNETPDKLTPVQ) lie on the Vacuolar side of the membrane. A helical transmembrane segment spans residues 209–229 (LTWLYSIMIFATVVKLALWLY). Residues 230–248 (CRTSGNKIVRAYAKDHYFD) lie on the Cytoplasmic side of the membrane. A helical transmembrane segment spans residues 249 to 269 (VVTNVVGLAAAVLGDMFYWWI). Residue Asp-270 is a topological domain, vacuolar. The helical transmembrane segment at 271 to 291 (PVGAIALAVYTITNWSGTVWE) threads the bilayer. The Cytoplasmic portion of the chain corresponds to 292–397 (NAVSLVGESA…ILSKLPSSQP (106 aa)).

Belongs to the cation diffusion facilitator (CDF) transporter (TC 2.A.4) family. SLC30A subfamily.

Its subcellular location is the vacuole membrane. Functionally, involved in sequestration of excess metal in the cytoplasm into vacuoles to maintain metal homeostasis. The sequence is that of Metal tolerance protein 4 (MTP4) from Oryza sativa subsp. japonica (Rice).